The chain runs to 182 residues: Ribosome-recycling factor (182 aa).

Residues 136–156 are disordered; sequence VKKQEKDGDFSEDQSRDEQDS.

Belongs to the RRF family.

The protein localises to the cytoplasm. Responsible for the release of ribosomes from messenger RNA at the termination of protein biosynthesis. May increase the efficiency of translation by recycling ribosomes from one round of translation to another. The sequence is that of Ribosome-recycling factor from Synechococcus sp. (strain CC9902).